We begin with the raw amino-acid sequence, 553 residues long: Dihydrolipoyllysine-residue acetyltransferase component of pyruvate dehydrogenase complex (553 aa).

The Lipoyl-binding 1 domain maps to 2–77; sequence AFSVQMPALG…EVGGELAVIG (76 aa). Lys-43 is subject to N6-lipoyllysine. The tract at residues 81–125 is disordered; sequence DAGEAAAPAPEKVPAAQPESKPAPEPPPVQPTSGAPAGGDAKPVL. A compositionally biased stretch (low complexity) spans 84-100; the sequence is EAAAPAPEKVPAAQPES. Residues 101-110 are compositionally biased toward pro residues; it reads KPAPEPPPVQ. In terms of domain architecture, Lipoyl-binding 2 spans 121–196; sequence AKPVLMPELG…PVGGELARIG (76 aa). N6-lipoyllysine is present on Lys-162. Disordered stretches follow at residues 204-238 and 278-321; these read APAPKPAPKPVPEPAPTPKAEPAPSPPAAQPAGAA and AAAE…TQKA. Residues 206-232 are compositionally biased toward pro residues; it reads APKPAPKPVPEPAPTPKAEPAPSPPAA. One can recognise a Peripheral subunit-binding (PSBD) domain in the interval 243–280; sequence YVTPLVRKLASENNIDLAGVTGTGVGGRIRKQDVLAAA. Residues 288–300 are compositionally biased toward low complexity; it reads APAPAAQAAAAPA. Active-site residues include His-523 and Asp-527.

This sequence belongs to the 2-oxoacid dehydrogenase family. Forms a 24-polypeptide structural core with octahedral symmetry. Part of the PDH complex, consisting of multiple copies of AceE (E1), DlaT (E2) and Lpd (E3). (R)-lipoate serves as cofactor.

It catalyses the reaction N(6)-[(R)-dihydrolipoyl]-L-lysyl-[protein] + acetyl-CoA = N(6)-[(R)-S(8)-acetyldihydrolipoyl]-L-lysyl-[protein] + CoA. Functionally, component of the pyruvate dehydrogenase (PDH) complex, that catalyzes the overall conversion of pyruvate to acetyl-CoA and CO(2). This Mycobacterium bovis (strain ATCC BAA-935 / AF2122/97) protein is Dihydrolipoyllysine-residue acetyltransferase component of pyruvate dehydrogenase complex (dlaT).